Here is a 209-residue protein sequence, read N- to C-terminus: Uracil phosphoribosyltransferase (209 aa).

Residues arginine 78, arginine 103, and 130–138 (DPMLATAGS) each bind 5-phospho-alpha-D-ribose 1-diphosphate. Uracil is bound by residues isoleucine 193 and 198–200 (GDA). Aspartate 199 serves as a coordination point for 5-phospho-alpha-D-ribose 1-diphosphate.

This sequence belongs to the UPRTase family. It depends on Mg(2+) as a cofactor.

The enzyme catalyses UMP + diphosphate = 5-phospho-alpha-D-ribose 1-diphosphate + uracil. The protein operates within pyrimidine metabolism; UMP biosynthesis via salvage pathway; UMP from uracil: step 1/1. With respect to regulation, allosterically activated by GTP. In terms of biological role, catalyzes the conversion of uracil and 5-phospho-alpha-D-ribose 1-diphosphate (PRPP) to UMP and diphosphate. This chain is Uracil phosphoribosyltransferase, found in Methylibium petroleiphilum (strain ATCC BAA-1232 / LMG 22953 / PM1).